The primary structure comprises 781 residues: Protein argonaute (781 aa).

Positions 110–194 (SMNELLTERR…RHNDYCNSVM (85 aa)) constitute a PAZ domain. In terms of domain architecture, Piwi spans 436-760 (LVVIVIPGPK…LSKFCGEVLR (325 aa)).

Belongs to the argonaute family. Ago subfamily. Interacts with miR2. Highly specific binding to the mRNA m7G-cap. May be a component of the RNA-induced silencing complex (RISC), a sequence-specific, multicomponent nuclease that destroys or silences messenger RNAs homologous to the silencing trigger.

It is found in the cytoplasm. Its function is as follows. Plays an essential role in growth and, with Dicer, also involved in microRNA (miRNA)-mediated translational repression. The RNA interference pathway is implicated in antigenic variation having a role in regulation of variant-specific surface protein (VSP)-coding gene expression. Several VSP genes are transcribed but only transcripts encoding the VSP to be expressed accumulate. Antisense RNAs corresponding to the silenced VSP genes are detected. This Giardia intestinalis (Giardia lamblia) protein is Protein argonaute.